The sequence spans 57 residues: Small ribosomal subunit protein bS21 (57 aa).

Positions 35–57 (REFYEKPSVRRKKKSEAARKRKY) are disordered. Residues 43–57 (VRRKKKSEAARKRKY) are compositionally biased toward basic residues.

The protein belongs to the bacterial ribosomal protein bS21 family.

The polypeptide is Small ribosomal subunit protein bS21 (Bacillus licheniformis (strain ATCC 14580 / DSM 13 / JCM 2505 / CCUG 7422 / NBRC 12200 / NCIMB 9375 / NCTC 10341 / NRRL NRS-1264 / Gibson 46)).